A 152-amino-acid polypeptide reads, in one-letter code: Gene 35 protein (152 aa).

Residues 86–120 are a coiled coil; that stretch reads PKKVDILEELTDKVEELEANVSFEVDRIQGYQERY.

The protein belongs to the herpesviridae UL96 family.

The sequence is that of Gene 35 protein (35) from Connochaetes taurinus (Blue wildebeest).